Reading from the N-terminus, the 294-residue chain is MLGDLFTKPKKRKYATIPSDGTKADVPEGIMTKCPECKKIMYTKELQKNLMVCNYCGFHHPIGAKARIDMLVDEGSFEEIDANLTTANPLGFEDYMDRIEKDKQKSGLNEAILTGHATIGGNPLVIAVMDSRFRMASMGSVVGEKILRAVEDADKTNKPFVIFTASGGARMQEGMLSLMQMAKTSAAFKRFSNHGGLVITVMTHPTTGGVSASFASLGDYNFAEPGALIGFAGRRVIEQTVREELPEDFQTAEFLLKHGQLDDCISRLDLQNKLSFILSIHVKTPEVGGEADGE.

Positions 30–294 (IMTKCPECKK…PEVGGEADGE (265 aa)) constitute a CoA carboxyltransferase N-terminal domain. Zn(2+)-binding residues include Cys34, Cys37, Cys53, and Cys56. The C4-type zinc-finger motif lies at 34 to 56 (CPECKKIMYTKELQKNLMVCNYC).

It belongs to the AccD/PCCB family. As to quaternary structure, acetyl-CoA carboxylase is a heterohexamer composed of biotin carboxyl carrier protein (AccB), biotin carboxylase (AccC) and two subunits each of ACCase subunit alpha (AccA) and ACCase subunit beta (AccD). Zn(2+) serves as cofactor.

The protein resides in the cytoplasm. It catalyses the reaction N(6)-carboxybiotinyl-L-lysyl-[protein] + acetyl-CoA = N(6)-biotinyl-L-lysyl-[protein] + malonyl-CoA. Its pathway is lipid metabolism; malonyl-CoA biosynthesis; malonyl-CoA from acetyl-CoA: step 1/1. Component of the acetyl coenzyme A carboxylase (ACC) complex. Biotin carboxylase (BC) catalyzes the carboxylation of biotin on its carrier protein (BCCP) and then the CO(2) group is transferred by the transcarboxylase to acetyl-CoA to form malonyl-CoA. This is Acetyl-coenzyme A carboxylase carboxyl transferase subunit beta from Listeria monocytogenes serotype 4a (strain HCC23).